Consider the following 336-residue polypeptide: Glyceraldehyde-3-phosphate dehydrogenase, chromosomal (336 aa).

NAD(+) is bound by residues 12–13 (RI), D37, R81, and S123. Residues 154–156 (SCT) and T185 contribute to the D-glyceraldehyde 3-phosphate site. C155 functions as the Nucleophile in the catalytic mechanism. N186 is a binding site for NAD(+). D-glyceraldehyde 3-phosphate contacts are provided by residues R200, 213-214 (TG), and R236. Position 317 (N317) interacts with NAD(+).

It belongs to the glyceraldehyde-3-phosphate dehydrogenase family. Homotetramer.

It catalyses the reaction D-glyceraldehyde 3-phosphate + phosphate + NAD(+) = (2R)-3-phospho-glyceroyl phosphate + NADH + H(+). It functions in the pathway carbohydrate biosynthesis; Calvin cycle. In terms of biological role, could be involved in carbon fixation as a component of the Calvin cycle. Catalyzes the oxidative phosphorylation of glyceraldehyde 3-phosphate (G3P) to 1,3-bisphosphoglycerate (BPG) using the cofactor NAD. The first reaction step involves the formation of a hemiacetal intermediate between G3P and a cysteine residue, and this hemiacetal intermediate is then oxidized to a thioester, with concomitant reduction of NAD to NADH. The reduced NADH is then exchanged with the second NAD, and the thioester is attacked by a nucleophilic inorganic phosphate to produce BPG. The sequence is that of Glyceraldehyde-3-phosphate dehydrogenase, chromosomal (cbbGC) from Cupriavidus necator (strain ATCC 17699 / DSM 428 / KCTC 22496 / NCIMB 10442 / H16 / Stanier 337) (Ralstonia eutropha).